We begin with the raw amino-acid sequence, 578 residues long: Acyl-CoA ligase AFT1-1 (578 aa).

ATP is bound by residues 210 to 218 (SSGTSGAQK), 350 to 355 (QCYGAT), Asp438, Arg457, and Lys554. The interval 281 to 350 (GVEDLLSIVE…RHHPTWKIKQ (70 aa)) is SBD1. Positions 351–413 (CYGATEAGTA…VSSPSLAIGY (63 aa)) are SBD2. The short motif at 576–578 (SKI) is the Peroxisomal targeting signal type 1 element.

It belongs to the ATP-dependent AMP-binding enzyme family.

The protein resides in the peroxisome. It functions in the pathway mycotoxin biosynthesis. Its function is as follows. Acyl-CoA ligase; part of the gene clusters that mediate the biosynthesis of the host-selective toxins (HSTs) AF-toxins responsible for Alternaria black spot of strawberry disease by the strawberry pathotype. AF-toxin I and III are valine derivatives of 2,3-dyhydroxy-isovaleric acid and 2-hydroxy-isovaleric acid respectively, while AF II is an isoleucine derivative of 2-hydroxy-valeric acid. These derivatives are bound to a 9,10-epoxy-8-hydroxy-9-methyl-decatrienoic acid (EDA) moiety. On cellular level, AF-toxins affect plasma membrane of susceptible cells and cause a sudden increase in loss of K(+) after a few minutes of toxin treatment. The aldo-keto reductase AFTS1 catalyzes the conversion of 2-keto-isovaleric acid (2-KIV) to 2-hydroxy-isovaleric acid (2-HIV) by reduction of its ketone to an alcohol. The acyl-CoA ligase AFT1, the hydrolase AFT2 and the enoyl-CoA hydratases AFT3 and AFT6, but also the polyketide synthase AFT9, the acyl-CoA dehydrogenase AFT10, the cytochrome P450 monooxygenase AFT11 and the oxidoreductase AFT12 are all involved in the biosynthesis of the AK-, AF- and ACT-toxin common EDA structural moiety. The exact role of each enzyme, and of additional enzymes identified within the AF-toxin clusters have still to be determined. This chain is Acyl-CoA ligase AFT1-1, found in Alternaria alternata (Alternaria rot fungus).